The primary structure comprises 440 residues: 3-phosphoshikimate 1-carboxyvinyltransferase (440 aa).

Positions 26, 27, and 31 each coordinate 3-phosphoshikimate. Lysine 26 lines the phosphoenolpyruvate pocket. Phosphoenolpyruvate contacts are provided by glycine 99 and arginine 127. Serine 172, glutamine 174, aspartate 320, and lysine 347 together coordinate 3-phosphoshikimate. Glutamine 174 lines the phosphoenolpyruvate pocket. Aspartate 320 serves as the catalytic Proton acceptor. Positions 351 and 392 each coordinate phosphoenolpyruvate.

The protein belongs to the EPSP synthase family. Monomer.

The protein localises to the cytoplasm. The catalysed reaction is 3-phosphoshikimate + phosphoenolpyruvate = 5-O-(1-carboxyvinyl)-3-phosphoshikimate + phosphate. It participates in metabolic intermediate biosynthesis; chorismate biosynthesis; chorismate from D-erythrose 4-phosphate and phosphoenolpyruvate: step 6/7. Functionally, catalyzes the transfer of the enolpyruvyl moiety of phosphoenolpyruvate (PEP) to the 5-hydroxyl of shikimate-3-phosphate (S3P) to produce enolpyruvyl shikimate-3-phosphate and inorganic phosphate. This chain is 3-phosphoshikimate 1-carboxyvinyltransferase, found in Xanthomonas axonopodis pv. citri (strain 306).